A 322-amino-acid chain; its full sequence is MLTDLIIELQQTLGILHKQDIQLASRQGQQRLIGDGEAIRLGDDCAAIPDENGYLLLAAEGMAPSLITQDPWFAGWCSVLVNVSDIYAMGGRPIAVVDALWSKSSDQAQQIWAGMQAASARFNVPIVGGHTNTHSGYDALGVAILGRAKSLITSFDAQVGDRLILVSNFQGKPRPNAPYCWDAATMAETETLQKHWDLLPYLAENKLCDAGKDVSMGGIIGTALMLLETSKCGAILDLDAISCPAGLDFRQWLLSFPSYGFLLSVRPQFVKTVKACFQAEGLIAEAIATIQPGHNLTLKLGSESQLFWDLQQNPLTGFTGDS.

This sequence to M.jannaschii MJ0640 and MJ0799.

This is an uncharacterized protein from Synechocystis sp. (strain ATCC 27184 / PCC 6803 / Kazusa).